The chain runs to 412 residues: MDTRSGSQCSVTPEAILNNEKLVLPPRISRVNGWSLPLHYFQVVTWAVFVGLSSATFGIFIPFLPHAWKYIAYVVTGGIFSFHLVVHLIASCIDPADSNVRLMKNYSQPMPLFDRSKHAHVIQNQFCHLCKVTVNKKTKHCISCNKCVSGFDHHCKWINNCVGSRNYWFFFSTVASATAGMLCLIAILLYVLVQYLVNPGVLRTDPRYEDVKNMNTWLLFLPLFPVQVQTLIVVIIGMLVLLLDFLGLVHLGQLLIFHIYLKAKKMTTFEYLINNRKEESSKHQAVRKDPYVQMDKGVLQQGAGALGSSAQGVKAKSSLLIHKHLCHFCTSVNQDGDSTAREGDEDPCPSALGAKARNSRLICRRLCQFSTRVHPDGGSMAQEADDAPSISTLGLQQETTEPMKTDSAESED.

Residues 1 to 42 (MDTRSGSQCSVTPEAILNNEKLVLPPRISRVNGWSLPLHYFQ) are Cytoplasmic-facing. Residues 43-63 (VVTWAVFVGLSSATFGIFIPF) traverse the membrane as a helical segment. The Lumenal segment spans residues 64–69 (LPHAWK). The helical transmembrane segment at 70 to 90 (YIAYVVTGGIFSFHLVVHLIA) threads the bilayer. The Cytoplasmic portion of the chain corresponds to 91–176 (SCIDPADSNV…YWFFFSTVAS (86 aa)). The DHHC domain maps to 125-175 (QFCHLCKVTVNKKTKHCISCNKCVSGFDHHCKWINNCVGSRNYWFFFSTVA). Cysteine 155 acts as the S-palmitoyl cysteine intermediate in catalysis. A helical membrane pass occupies residues 177–197 (ATAGMLCLIAILLYVLVQYLV). The Lumenal segment spans residues 198-230 (NPGVLRTDPRYEDVKNMNTWLLFLPLFPVQVQT). A mediates interaction with IRF3 and STING1 region spans residues 198 to 412 (NPGVLRTDPR…MKTDSAESED (215 aa)). Residues 231–251 (LIVVIIGMLVLLLDFLGLVHL) form a helical membrane-spanning segment. Over 252–412 (GQLLIFHIYL…MKTDSAESED (161 aa)) the chain is Cytoplasmic. The tract at residues 374–412 (HPDGGSMAQEADDAPSISTLGLQQETTEPMKTDSAESED) is disordered. Over residues 389–400 (SISTLGLQQETT) the composition is skewed to polar residues. Residues 401–412 (EPMKTDSAESED) show a composition bias toward basic and acidic residues.

It belongs to the DHHC palmitoyltransferase family. In terms of assembly, interacts with IRF3 and STING1; in presence of DNA viruses recruits IRF3 to STING1 promoting IRF3 phosphorylation and activation. Expressed in testis.

The protein resides in the endoplasmic reticulum membrane. The enzyme catalyses L-cysteinyl-[protein] + hexadecanoyl-CoA = S-hexadecanoyl-L-cysteinyl-[protein] + CoA. Endoplasmic reticulum-localized palmitoyltransferase that could catalyze the addition of palmitate onto various protein substrates and be involved in a variety of cellular processes. Has a palmitoyltransferase activity toward NCDN and regulates NCDN association with endosome membranes through this palmitoylation. May play a role in cell proliferation. In terms of biological role, also has a palmitoyltransferase activity-independent function in DNA virus-triggered and CGAS-mediated innate immune response. Functions as an adapter that recruits IRF3 to STING1 to promote the activation of that key transcriptional regulator of type I interferon (IFN)-dependent immune response. The protein is Palmitoyltransferase ZDHHC11 of Homo sapiens (Human).